Consider the following 254-residue polypeptide: Flavin-dependent thymidylate synthase (254 aa).

A ThyX domain is found at 7 to 237 (LRVQLIARTE…PAVFADFEIY (231 aa)). FAD-binding positions include Ser71, 95–97 (RHR), and Gln103. DUMP-binding positions include 92–95 (ELIR), 103–107 (QLSQR), and Arg176. Positions 95–105 (RHRHFSYSQLS) match the ThyX motif motif. FAD contacts are provided by residues 192–194 (NYR) and His198. Arg203 is a dUMP binding site. The Involved in ionization of N3 of dUMP, leading to its activation role is filled by Arg203.

The protein belongs to the thymidylate synthase ThyX family. As to quaternary structure, homotetramer. Requires FAD as cofactor.

The catalysed reaction is dUMP + (6R)-5,10-methylene-5,6,7,8-tetrahydrofolate + NADPH + H(+) = dTMP + (6S)-5,6,7,8-tetrahydrofolate + NADP(+). It functions in the pathway pyrimidine metabolism; dTTP biosynthesis. Functionally, catalyzes the reductive methylation of 2'-deoxyuridine-5'-monophosphate (dUMP) to 2'-deoxythymidine-5'-monophosphate (dTMP) while utilizing 5,10-methylenetetrahydrofolate (mTHF) as the methyl donor, and NADPH and FADH(2) as the reductant. The protein is Flavin-dependent thymidylate synthase of Mycobacterium sp. (strain KMS).